The following is a 366-amino-acid chain: Elongation factor Ts, mitochondrial (366 aa).

The transit peptide at 1–50 directs the protein to the mitochondrion; sequence MAWSQSARKPMIGLLFRAQQHSARGYSYSAFQAHLSSSNVDQSATLLRRF.

The protein belongs to the EF-Ts family.

It is found in the mitochondrion. In terms of biological role, associates with the EF-Tu.GDP complex and induces the exchange of GDP to GTP. It remains bound to the aminoacyl-tRNA.EF-Tu.GTP complex up to the GTP hydrolysis stage on the ribosome. The sequence is that of Elongation factor Ts, mitochondrial from Oryza sativa subsp. japonica (Rice).